The sequence spans 619 residues: Protein CPn_1016/CP_0837/CPj1016/CpB1054 (619 aa).

Residues 591-619 (NAKKSEEQTSPQETPEVIRVSYPTTTSAL) form a disordered region.

This sequence belongs to the chlamydial CPn_1016/CT_858/TC_0248 family.

In Chlamydia pneumoniae (Chlamydophila pneumoniae), this protein is Protein CPn_1016/CP_0837/CPj1016/CpB1054.